The sequence spans 158 residues: Low molecular weight phosphotyrosine protein phosphatase (158 aa).

The residue at position 2 (alanine 2) is an N-acetylalanine. Cysteine 13 functions as the Nucleophile in the catalytic mechanism. Arginine 19 is a catalytic residue. The active-site Proton donor is aspartate 130. 2 positions are modified to phosphotyrosine: tyrosine 132 and tyrosine 133.

It belongs to the low molecular weight phosphotyrosine protein phosphatase family. As to quaternary structure, interacts with EPHA2; dephosphorylates EPHA2. Interacts with EPHB1. In terms of assembly, interacts with the SH3 domain of SPTAN1. There is no interaction observed for isoforms 2 or 3. In terms of processing, phosphorylated by LCK. Phosphorylation at Tyr-132 increases its phosphatase activity. Not phosphorylated. As to expression, expressed in T-lymphocytes.

The protein localises to the cytoplasm. It catalyses the reaction O-phospho-L-tyrosyl-[protein] + H2O = L-tyrosyl-[protein] + phosphate. It carries out the reaction a phosphate monoester + H2O = an alcohol + phosphate. With respect to regulation, inhibited by sulfhydryl reagents. Functionally, acts on tyrosine phosphorylated proteins, low-MW aryl phosphates and natural and synthetic acyl phosphates with differences in substrate specificity between isoform 1 and isoform 2. Its function is as follows. Does not possess phosphatase activity. This Homo sapiens (Human) protein is Low molecular weight phosphotyrosine protein phosphatase.